A 438-amino-acid chain; its full sequence is Serine hydroxymethyltransferase (438 aa).

(6S)-5,6,7,8-tetrahydrofolate-binding positions include Leu-133 and 137 to 139 (GHL). N6-(pyridoxal phosphate)lysine is present on Lys-242.

Belongs to the SHMT family. Homodimer. Requires pyridoxal 5'-phosphate as cofactor.

The protein localises to the cytoplasm. The catalysed reaction is (6R)-5,10-methylene-5,6,7,8-tetrahydrofolate + glycine + H2O = (6S)-5,6,7,8-tetrahydrofolate + L-serine. Its pathway is one-carbon metabolism; tetrahydrofolate interconversion. It participates in amino-acid biosynthesis; glycine biosynthesis; glycine from L-serine: step 1/1. Catalyzes the reversible interconversion of serine and glycine with tetrahydrofolate (THF) serving as the one-carbon carrier. This reaction serves as the major source of one-carbon groups required for the biosynthesis of purines, thymidylate, methionine, and other important biomolecules. Also exhibits THF-independent aldolase activity toward beta-hydroxyamino acids, producing glycine and aldehydes, via a retro-aldol mechanism. The protein is Serine hydroxymethyltransferase of Brucella ovis (strain ATCC 25840 / 63/290 / NCTC 10512).